The primary structure comprises 202 residues: Putative pituitary tumor-transforming gene 3 protein (202 aa).

Residues 61–64 carry the D-box motif; it reads RKAL. Positions 67-92 are disordered; that stretch reads VNRATEKSVKTNGPLKQKQPSFSAKK. The SH3-binding motif lies at 163-173; that stretch reads PPLPLKMPSPP.

It belongs to the securin family.

It localises to the cytoplasm. It is found in the nucleus. This is Putative pituitary tumor-transforming gene 3 protein (PTTG3) from Pongo pygmaeus (Bornean orangutan).